A 325-amino-acid polypeptide reads, in one-letter code: Olfactory receptor 5H6 (325 aa).

Topologically, residues 1–41 (MFLYLCFIFQRTCSEEMEEENATLLTEFVLTGFLHQPDCKI) are extracellular. Asn-21 carries N-linked (GlcNAc...) asparagine glycosylation. Residues 42 to 62 (PLFLAFLVIYLITIMGNLGLI) form a helical membrane-spanning segment. Residues 63–70 (VLIWKDPH) are Cytoplasmic-facing. Residues 71–91 (LHIPMYLFLGSLAFVDASLSS) traverse the membrane as a helical segment. Over 92 to 115 (TVTPKMLINFLAKSKMISLSECMV) the chain is Extracellular. Cys-113 and Cys-205 form a disulfide bridge. Residues 116 to 136 (QFFSLVTTVTTECFLLATMAY) traverse the membrane as a helical segment. Residues 137-155 (DRYVAICKALLYPVIMTNE) are Cytoplasmic-facing. Residues 156–176 (LCIQLLVLSFIGGLLHALIHE) form a helical membrane-spanning segment. Topologically, residues 177–212 (AFSFRLTFCNSNIIQHFYCDIIPLLKISCTDSSINF) are extracellular. A helical membrane pass occupies residues 213-233 (LMVFIFAGSVQVFTIGTILIS). The Cytoplasmic segment spans residues 234–253 (YTIILFTILEKKSIKGIRKA). A helical membrane pass occupies residues 254–274 (VSTCGAHLLSVSLYYGPLTFK). Residues 275–287 (YLGSASPQADDQD) lie on the Extracellular side of the membrane. The chain crosses the membrane as a helical span at residues 288–308 (MMESLFYTVIVPLLNPMIYSL). Residues 309 to 325 (RNKQVIASFTKMFKSNV) lie on the Cytoplasmic side of the membrane.

Belongs to the G-protein coupled receptor 1 family.

The protein resides in the cell membrane. Functionally, odorant receptor. This is Olfactory receptor 5H6 (OR5H6) from Homo sapiens (Human).